The following is a 311-amino-acid chain: Bifunctional protein FolD (311 aa).

Residue glycine 174–glycine 176 coordinates NADP(+).

This sequence belongs to the tetrahydrofolate dehydrogenase/cyclohydrolase family. In terms of assembly, homodimer.

The catalysed reaction is (6R)-5,10-methylene-5,6,7,8-tetrahydrofolate + NADP(+) = (6R)-5,10-methenyltetrahydrofolate + NADPH. It carries out the reaction (6R)-5,10-methenyltetrahydrofolate + H2O = (6R)-10-formyltetrahydrofolate + H(+). It participates in one-carbon metabolism; tetrahydrofolate interconversion. Its function is as follows. Catalyzes the oxidation of 5,10-methylenetetrahydrofolate to 5,10-methenyltetrahydrofolate and then the hydrolysis of 5,10-methenyltetrahydrofolate to 10-formyltetrahydrofolate. The sequence is that of Bifunctional protein FolD from Pyrobaculum islandicum (strain DSM 4184 / JCM 9189 / GEO3).